We begin with the raw amino-acid sequence, 310 residues long: Syntaxin-related protein KNOLLE (310 aa).

At Met-1 the chain carries N-acetylmethionine. Topologically, residues 1 to 283 (MNDLMTKSFM…AKSHQRNSRK (283 aa)) are cytoplasmic. The stretch at 94-159 (NEIVSGLRKA…FQGLRQKMMS (66 aa)) forms a coiled coil. In terms of domain architecture, t-SNARE coiled-coil homology spans 212-274 (VVEIQDRYDA…ADGANELKTA (63 aa)). The chain crosses the membrane as a helical; Anchor for type IV membrane protein span at residues 284–304 (WMCIGIIVLLLIILIVVIPII). Topologically, residues 305–310 (TSFSSS) are vesicular.

This sequence belongs to the syntaxin family. As to quaternary structure, interacts with SNAP33 and/or NPSN11 to form a t-SNARE complex and with KEULE. Abundant in flowers and developing siliques. A low level expression is seen in the seedlings, roots, and leaves.

The protein localises to the membrane. Its function is as follows. Involved in cytokinesis. Acts as a cell plate-specific syntaxin, required for the fusion of vesicles at the plane of cell division. This is Syntaxin-related protein KNOLLE (KN) from Arabidopsis thaliana (Mouse-ear cress).